Here is a 402-residue protein sequence, read N- to C-terminus: Coiled-coil domain-containing protein 188 (402 aa).

Disordered stretches follow at residues 1–30, 50–74, and 108–131; these read MEGL…GGGL, HSVQ…EGEA, and HPGS…PCPC. Residues 154 to 189 adopt a coiled-coil conformation; it reads GLLGSAEQSFLQLEQENHSLKRQNQELREQLGALLG. Residues 347-363 traverse the membrane as a helical segment; it reads LLLGALLVWTAAYVYVV.

Its subcellular location is the membrane. This chain is Coiled-coil domain-containing protein 188, found in Homo sapiens (Human).